The sequence spans 283 residues: Bifunctional protein FolD (283 aa).

Gly166–Ser168 is a binding site for NADP(+).

This sequence belongs to the tetrahydrofolate dehydrogenase/cyclohydrolase family. In terms of assembly, homodimer.

It catalyses the reaction (6R)-5,10-methylene-5,6,7,8-tetrahydrofolate + NADP(+) = (6R)-5,10-methenyltetrahydrofolate + NADPH. It carries out the reaction (6R)-5,10-methenyltetrahydrofolate + H2O = (6R)-10-formyltetrahydrofolate + H(+). Its pathway is one-carbon metabolism; tetrahydrofolate interconversion. Catalyzes the oxidation of 5,10-methylenetetrahydrofolate to 5,10-methenyltetrahydrofolate and then the hydrolysis of 5,10-methenyltetrahydrofolate to 10-formyltetrahydrofolate. The chain is Bifunctional protein FolD from Coxiella burnetii (strain Dugway 5J108-111).